The primary structure comprises 230 residues: UPF0173 metal-dependent hydrolase Rsph17029_0942 (230 aa).

This sequence belongs to the UPF0173 family.

The sequence is that of UPF0173 metal-dependent hydrolase Rsph17029_0942 from Cereibacter sphaeroides (strain ATCC 17029 / ATH 2.4.9) (Rhodobacter sphaeroides).